The following is a 199-amino-acid chain: Peptidyl-prolyl cis-trans isomerase CYP22 (199 aa).

Positions 35–198 (FFDVSIGGIP…LAVVITECGE (164 aa)) constitute a PPIase cyclophilin-type domain.

It belongs to the cyclophilin-type PPIase family. Ubiquitous.

It catalyses the reaction [protein]-peptidylproline (omega=180) = [protein]-peptidylproline (omega=0). PPIases accelerate the folding of proteins. It catalyzes the cis-trans isomerization of proline imidic peptide bonds in oligopeptides. In Arabidopsis thaliana (Mouse-ear cress), this protein is Peptidyl-prolyl cis-trans isomerase CYP22 (CYP22).